Consider the following 586-residue polypeptide: MFS-type transporter ucsD (586 aa).

The tract at residues 1–56 (MSRNSGTTLEDGPLHADPTTEAPNNATVTTNVTANDENTEKEVDADAAAAAPAEAP) is disordered. 2 stretches are compositionally biased toward low complexity: residues 19-36 (TTEA…TAND) and 46-56 (DAAAAAPAEAP). N-linked (GlcNAc...) asparagine glycans are attached at residues Asn-25 and Asn-31. 8 consecutive transmembrane segments (helical) span residues 65–85 (WAIV…GTII), 101–121 (SFIW…PLMA), 131–151 (WLTL…GGAN), 164–184 (GFGG…LVPL), 192–212 (GIVQ…GGLL), 220–240 (WVFY…FFFL), 263–283 (AIFI…GAVY), and 290–310 (VIVP…YEWT). A glycan (N-linked (GlcNAc...) asparagine) is linked at Asn-324. The next 6 helical transmembrane spans lie at 330-350 (VLGV…FMPI), 368-388 (LPLF…LAKF), 393-413 (PMHL…SLLD), 420-440 (AWAC…AILL), 458-478 (VWTF…SAIF), and 532-552 (LRTV…LIWL).

It belongs to the major facilitator superfamily.

The protein localises to the membrane. Functionally, MFS-type transporter; part of the gene cluster that mediates the biosynthesis of UCS1025A, a member of the pyrrolizidinone family that acts as a strong telomerase inhibitor and displays potent antibacterial and antitumor properties. These compounds share a hemiaminal-containing pyrrolizidinone core fused with a gamma-lactone, giving a furopyrrolizidine that is connected to a decalin fragment. This chain is MFS-type transporter ucsD, found in Acremonium sp.